Consider the following 196-residue polypeptide: Small ribosomal subunit protein uS4c (196 aa).

The interval 15–36 is disordered; that stretch reads LGTLPGLTSKRPRSGSDLKNPL. Positions 89-150 constitute an S4 RNA-binding domain; sequence MRLDNILFRL…KQRSKALIQN (62 aa).

This sequence belongs to the universal ribosomal protein uS4 family. In terms of assembly, part of the 30S ribosomal subunit. Contacts protein S5. The interaction surface between S4 and S5 is involved in control of translational fidelity.

The protein localises to the plastid. The protein resides in the chloroplast. One of the primary rRNA binding proteins, it binds directly to 16S rRNA where it nucleates assembly of the body of the 30S subunit. In terms of biological role, with S5 and S12 plays an important role in translational accuracy. The sequence is that of Small ribosomal subunit protein uS4c (rps4) from Yucca filamentosa (Bear-grass).